The primary structure comprises 577 residues: Zinc finger-containing ubiquitin peptidase 1 (577 aa).

The segment at 2-24 (LSCNICGETVNSEPDMKAHLIVH) adopts a C2H2-type 1 zinc-finger fold. The segment at 29-52 (IICPFCKLSGINYNEICFHIETVH) adopts a C2H2-type 2; atypical zinc-finger fold. A compositionally biased stretch (basic and acidic residues) spans 124–137 (ESRKYQKSREKKPG). The tract at residues 124–145 (ESRKYQKSREKKPGLSEAQGSI) is disordered. The segment at 153-176 (PECPFCGKIEGCSQDMEIHVKTKH) adopts a C2H2-type 3; atypical zinc-finger fold. The C2H2-type 4 zinc finger occupies 192–214 (YDCPMCGLVCTNYHILQEHVDLH). Positions 225–247 (DRVQCSSDRELAHRLQQEEDRKR) are MIU. A disordered region spans residues 238-260 (RLQQEEDRKRKSEESRQEREEFQ). Residues 248 to 273 (KSEESRQEREEFQKLQRQYGLDNSGG) form a zUBD/ZHA region. N6-acetyllysine is present on lysine 261. Residue cysteine 359 is the Nucleophile of the active site. Histidine 490 (proton acceptor) is an active-site residue. Residue aspartate 511 is part of the active site.

This sequence belongs to the peptidase C78 family. ZUFSP subfamily. As to quaternary structure, interacts with RPA1 and RPA2.

The protein resides in the cytoplasm. It localises to the nucleus. The enzyme catalyses Thiol-dependent hydrolysis of ester, thioester, amide, peptide and isopeptide bonds formed by the C-terminal Gly of ubiquitin (a 76-residue protein attached to proteins as an intracellular targeting signal).. Deubiquitinase with endodeubiquitinase activity that specifically interacts with and cleaves 'Lys-63'-linked long polyubiquitin chains. Shows only weak activity against 'Lys-11' and 'Lys-48'-linked chains. Plays an important role in genome stability pathways, functioning to prevent spontaneous DNA damage and also promote cellular survival in response to exogenous DNA damage. Modulates the ubiquitination status of replication protein A (RPA) complex proteins in response to replication stress. This Mus musculus (Mouse) protein is Zinc finger-containing ubiquitin peptidase 1.